A 723-amino-acid polypeptide reads, in one-letter code: Probable alpha-fucosidase A (723 aa).

The signal sequence occupies residues Met1 to Ala15. Asn77, Asn98, Asn117, Asn171, Asn194, Asn243, Asn334, Asn558, Asn566, and Asn595 each carry an N-linked (GlcNAc...) asparagine glycan.

Belongs to the glycosyl hydrolase 95 family.

It localises to the secreted. It carries out the reaction an alpha-L-fucoside + H2O = L-fucose + an alcohol. Functionally, alpha-fucosidase involved in degradation of fucosylated xyloglucans. Hydrolyzes alpha-1,2-linked fucose. This chain is Probable alpha-fucosidase A (afcA), found in Aspergillus oryzae (strain ATCC 42149 / RIB 40) (Yellow koji mold).